We begin with the raw amino-acid sequence, 351 residues long: DNA polymerase IV (351 aa).

The UmuC domain maps to 4–185; the sequence is IIHVDMDCFF…LPLAKIPGVG (182 aa). Residues aspartate 8 and aspartate 103 each contribute to the Mg(2+) site. Glutamate 104 is a catalytic residue.

The protein belongs to the DNA polymerase type-Y family. Monomer. It depends on Mg(2+) as a cofactor.

Its subcellular location is the cytoplasm. It catalyses the reaction DNA(n) + a 2'-deoxyribonucleoside 5'-triphosphate = DNA(n+1) + diphosphate. Poorly processive, error-prone DNA polymerase involved in untargeted mutagenesis. Copies undamaged DNA at stalled replication forks, which arise in vivo from mismatched or misaligned primer ends. These misaligned primers can be extended by PolIV. Exhibits no 3'-5' exonuclease (proofreading) activity. May be involved in translesional synthesis, in conjunction with the beta clamp from PolIII. This Escherichia coli O1:K1 / APEC protein is DNA polymerase IV.